A 440-amino-acid polypeptide reads, in one-letter code: Proline--tRNA ligase (440 aa).

Belongs to the class-II aminoacyl-tRNA synthetase family. ProS type 2 subfamily. In terms of assembly, homodimer.

The protein localises to the cytoplasm. The catalysed reaction is tRNA(Pro) + L-proline + ATP = L-prolyl-tRNA(Pro) + AMP + diphosphate. Its function is as follows. Catalyzes the attachment of proline to tRNA(Pro) in a two-step reaction: proline is first activated by ATP to form Pro-AMP and then transferred to the acceptor end of tRNA(Pro). In Xanthobacter autotrophicus (strain ATCC BAA-1158 / Py2), this protein is Proline--tRNA ligase.